Consider the following 437-residue polypeptide: 2-methylisoborneol synthase (437 aa).

A disordered region spans residues 32 to 125 (AHDSEATVGG…IPGLYHHPVP (94 aa)). A compositionally biased stretch (pro residues) spans 59–73 (PPSPAAPPTDVPAPE). 6 residues coordinate Mg(2+): D194, D195, E199, N342, S346, and E350.

This sequence belongs to the terpene synthase family. 2-methylisoborneol synthase subfamily. Mg(2+) is required as a cofactor.

It catalyses the reaction (E)-2-methylgeranyl diphosphate + H2O = 2-methylisoborneol + diphosphate. In terms of biological role, catalyzes the cyclization of 2-methylgeranyl diphosphate (2-MeGPP) to 2-methylisoborneol (2-MIB), which likely involves the intermediacy of 2-methyllinalyl diphosphate. The polypeptide is 2-methylisoborneol synthase (Streptomyces griseus).